Reading from the N-terminus, the 109-residue chain is Nucleoid-associated protein LJ_0424 (109 aa).

This sequence belongs to the YbaB/EbfC family. As to quaternary structure, homodimer.

It is found in the cytoplasm. The protein localises to the nucleoid. Binds to DNA and alters its conformation. May be involved in regulation of gene expression, nucleoid organization and DNA protection. The sequence is that of Nucleoid-associated protein LJ_0424 from Lactobacillus johnsonii (strain CNCM I-12250 / La1 / NCC 533).